A 190-amino-acid chain; its full sequence is Nucleoside triphosphate pyrophosphatase (190 aa).

Catalysis depends on Asp69, which acts as the Proton acceptor.

It belongs to the Maf family. It depends on a divalent metal cation as a cofactor.

The protein localises to the cytoplasm. The enzyme catalyses a ribonucleoside 5'-triphosphate + H2O = a ribonucleoside 5'-phosphate + diphosphate + H(+). It carries out the reaction a 2'-deoxyribonucleoside 5'-triphosphate + H2O = a 2'-deoxyribonucleoside 5'-phosphate + diphosphate + H(+). Nucleoside triphosphate pyrophosphatase. May have a dual role in cell division arrest and in preventing the incorporation of modified nucleotides into cellular nucleic acids. The chain is Nucleoside triphosphate pyrophosphatase from Helicobacter pylori (strain J99 / ATCC 700824) (Campylobacter pylori J99).